Here is a 117-residue protein sequence, read N- to C-terminus: Ribosome-binding factor A (117 aa).

This sequence belongs to the RbfA family. Monomer. Binds 30S ribosomal subunits, but not 50S ribosomal subunits or 70S ribosomes.

It localises to the cytoplasm. Its function is as follows. One of several proteins that assist in the late maturation steps of the functional core of the 30S ribosomal subunit. Associates with free 30S ribosomal subunits (but not with 30S subunits that are part of 70S ribosomes or polysomes). Required for efficient processing of 16S rRNA. May interact with the 5'-terminal helix region of 16S rRNA. This Leptospira interrogans serogroup Icterohaemorrhagiae serovar Lai (strain 56601) protein is Ribosome-binding factor A.